We begin with the raw amino-acid sequence, 156 residues long: NAD(P)H-quinone oxidoreductase subunit N (156 aa).

Belongs to the complex I NdhN subunit family. In terms of assembly, NDH-1 can be composed of about 15 different subunits; different subcomplexes with different compositions have been identified which probably have different functions.

It localises to the cellular thylakoid membrane. The enzyme catalyses a plastoquinone + NADH + (n+1) H(+)(in) = a plastoquinol + NAD(+) + n H(+)(out). It catalyses the reaction a plastoquinone + NADPH + (n+1) H(+)(in) = a plastoquinol + NADP(+) + n H(+)(out). Functionally, NDH-1 shuttles electrons from an unknown electron donor, via FMN and iron-sulfur (Fe-S) centers, to quinones in the respiratory and/or the photosynthetic chain. The immediate electron acceptor for the enzyme in this species is believed to be plastoquinone. Couples the redox reaction to proton translocation, and thus conserves the redox energy in a proton gradient. Cyanobacterial NDH-1 also plays a role in inorganic carbon-concentration. The protein is NAD(P)H-quinone oxidoreductase subunit N of Prochlorococcus marinus (strain MIT 9515).